The chain runs to 801 residues: Protein SDA1 homolog (801 aa).

4 disordered regions span residues 1 to 40 (MGKVSKSPGKGEKRIGKVGKKNGKSNAPTEGSNSGKASRF), 495 to 517 (RKDRGKPQEKDDEDEEYNGFARP), 536 to 647 (GEQG…SKNS), and 739 to 801 (DYKF…RKPQ). Over residues 24–40 (KSNAPTEGSNSGKASRF) the composition is skewed to polar residues. Acidic residues-rich tracts occupy residues 544–568 (DGTDSELDVSDVDTDDVDTDDDADE) and 583–633 (NDAE…EASE). Composition is skewed to basic residues over residues 770-779 (NKIRGRNRQR) and 787-801 (SLRHYLMRQSGRKPQ).

The protein belongs to the SDA1 family.

The protein resides in the nucleus. Required for 60S pre-ribosomal subunits export to the cytoplasm. Required for normal somatic gonad development and for regulation of germline development and proliferation. This Caenorhabditis elegans protein is Protein SDA1 homolog (pro-3).